Here is a 311-residue protein sequence, read N- to C-terminus: MALPILLDCDPGHDDAIAIVLALASPELDVKAITSSAGNQTPEKTLRNVLRMLTLLNRTDIPVAGGAVKPLMRELIIADNVHGESGLDGPALPEPAFAPQNCTAVELMAKTLRESAEPVTIVSTGPQTNVALLLNSHPELHSKIARIVIMGGAMGLGNWTPAAEFNIYVDPEAAEIVFQSGIPVVMAGLDVTHKAQIHVEDTERFRAIGNPVSTIVAELLDFFLEYHKDEKWGFVGAPLHDPCTIAWLLKPELFTSVERWVGVETQGKYTQGMTVVDYYYLTGNKPNATVMVDVDRQGFVDLLADRLKFYA.

H240 is an active-site residue.

Belongs to the IUNH family. RihA subfamily.

In terms of biological role, hydrolyzes with equal efficiency cytidine or uridine to ribose and cytosine or uracil, respectively. This chain is Pyrimidine-specific ribonucleoside hydrolase RihA, found in Escherichia coli (strain ATCC 8739 / DSM 1576 / NBRC 3972 / NCIMB 8545 / WDCM 00012 / Crooks).